Here is a 199-residue protein sequence, read N- to C-terminus: Recombination protein RecR (199 aa).

The C4-type zinc-finger motif lies at 56 to 71; the sequence is CQQCNNYTEQTLCALC. One can recognise a Toprim domain in the interval 79–174; the sequence is TLLCVVESPA…NISQLAHGIP (96 aa).

The protein belongs to the RecR family.

In terms of biological role, may play a role in DNA repair. It seems to be involved in an RecBC-independent recombinational process of DNA repair. It may act with RecF and RecO. This Legionella pneumophila subsp. pneumophila (strain Philadelphia 1 / ATCC 33152 / DSM 7513) protein is Recombination protein RecR.